We begin with the raw amino-acid sequence, 948 residues long: Valine--tRNA ligase (948 aa).

A 'HIGH' region motif is present at residues 40-50 (PNVTGSLHMGH). Residues 551 to 555 (KMSKS) carry the 'KMSKS' region motif. Residue Lys-554 participates in ATP binding. Residues 879-945 (LIDKGAELAR…GKLAEQHARI (67 aa)) are a coiled coil.

This sequence belongs to the class-I aminoacyl-tRNA synthetase family. ValS type 1 subfamily. Monomer.

It is found in the cytoplasm. The catalysed reaction is tRNA(Val) + L-valine + ATP = L-valyl-tRNA(Val) + AMP + diphosphate. Functionally, catalyzes the attachment of valine to tRNA(Val). As ValRS can inadvertently accommodate and process structurally similar amino acids such as threonine, to avoid such errors, it has a 'posttransfer' editing activity that hydrolyzes mischarged Thr-tRNA(Val) in a tRNA-dependent manner. This Pseudomonas syringae pv. tomato (strain ATCC BAA-871 / DC3000) protein is Valine--tRNA ligase.